The chain runs to 676 residues: Polyunsaturated fatty acid lipoxygenase ALOX15B (676 aa).

The 123-residue stretch at 2-124 (AEFRVRVSTG…TLVLQEGTAK (123 aa)) folds into the PLAT domain. Residues glycine 15, glycine 17, aspartate 39, asparagine 40, glycine 42, glutamate 44, aspartate 85, and alanine 86 each coordinate Ca(2+). One can recognise a Lipoxygenase domain in the interval 125–676 (VSWADHHPVL…PPLIENSVSI (552 aa)). Positions 373, 378, 553, and 676 each coordinate Fe cation.

The protein belongs to the lipoxygenase family. Requires Fe cation as cofactor. As to expression, expressed in hair, prostate, lung, ovary, lymph node, spinal cord and cornea.

The protein localises to the nucleus. The protein resides in the cytoplasm. Its subcellular location is the cytosol. It localises to the cell membrane. It is found in the cytoskeleton. The protein localises to the membrane. The protein resides in the cell junction. Its subcellular location is the adherens junction. It localises to the focal adhesion. It carries out the reaction (5Z,8Z,11Z,14Z)-eicosatetraenoate + O2 = (15S)-hydroperoxy-(5Z,8Z,11Z,13E)-eicosatetraenoate. It catalyses the reaction (9Z,12Z)-octadecadienoate + O2 = 13-hydroperoxy-(9Z,11E)-octadecadienoate. The enzyme catalyses (5S)-hydroxy-(6E,8Z,11Z,14Z)-eicosatetraenoate + O2 = (5S)-hydroxy-(15S)-hydroperoxy-(6E,8Z,11Z,13E)-eicosatetraenoate. The catalysed reaction is (5Z,8Z,11Z,14Z)-eicosatetraenoate + O2 = 5-hydroperoxy-(6E,8Z,11Z,14Z)-eicosatetraenoate. It carries out the reaction (5S,6R)-dihydroxy-(7E,9E,11Z,14Z)-eicosatetraenoate + O2 = (5S,6R)-dihydroxy-(15S)-hydroperoxy-(7E,9E,11Z,13E)-eicosatetraenoate. It catalyses the reaction (5S)-hydroperoxy-(6E,8Z,11Z,14Z)-eicosatetraenoate + O2 = (5S,15S)-dihydroperoxy-(6E,8Z,11Z,13E)-eicosatetraenoate. The enzyme catalyses 2-(5Z,8Z,11Z,14Z-eicosatetraenoyl)-glycerol + O2 = 2-[15(S)-hydroperoxy-(5Z,8Z,11Z,13E)-eicosatetraenoyl]-glycerol. The catalysed reaction is (8S)-hydroperoxy-(5Z,9E,11Z,14Z)-eicosatetraenoate + O2 = (8S,15S)-dihydroperoxy-(5Z,9E,11Z,13E)-eicosatetraenoate. It carries out the reaction N-(5Z,8Z,11Z,14Z)-eicosatetraenoyl-L-alanine + O2 = N-(15S)-hydroperoxy-(5Z,8Z,11Z,13E)-eicosatetraenoyl-alanine. It catalyses the reaction N-(5Z,8Z,11Z,14Z)-eicosatetraenoyl-gamma-aminobutanoate + O2 = N-(15S)-hydroperoxy-(5Z,8Z,11Z,13E)-eicosatetraenoyl-gamma-aminobutanoate. The enzyme catalyses N-(5Z,8Z,11Z,14Z)-eicosatetraenoyl-glycine + O2 = N-(15S)-hydroperoxy-(5Z,8Z,11Z,13E)-eicosatetraenoyl-glycine. The catalysed reaction is N-(5Z,8Z,11Z,14Z)-eicosatetraenoyl-taurine + O2 = N-(15S)-hydroperoxy-(5Z,8Z,11Z,13E)-eicosatetraenoyl-taurine. It carries out the reaction 2-(5Z,8Z,11Z,14Z-eicosatetraenoyl)-glycerol + O2 = 2-[12-hydroperoxy-(5Z,8Z,10E,14Z)-eicosatetraenoyl]-glycerol. It catalyses the reaction 1-octadecanoyl-2-(5Z,8Z,11Z,14Z-eicosatetraenoyl)-sn-glycero-3-phosphocholine + O2 = 1-octadecanoyl-2-(15-hydroperoxy-5Z,8Z,11Z,13E-eicosatetraenoyl)-sn-glycero-3-phosphocholine. The enzyme catalyses a 1-acyl-2-(5Z,8Z,11Z,14Z-eicosatetraenoyl)-sn-glycero-3-phospho-(1D-myo-inositol) + O2 = a 1-acyl-2-(15-hydroperoxy-5Z,8Z,11Z,13E-eicosatetraenoyl)-sn-glycero-3-phospho-(1D-myo-inositol). The catalysed reaction is a 1-acyl-2-(8Z,11Z,14Z-eicosatrienoyl)-sn-glycero-3-phospho-(1D-myo-inositol) + O2 = a 1-acyl-2-(15-hydroperoxy-8Z,11Z,13E-eicosatrienoyl)-sn-glycero-3-phospho-(1D-myo-inositol). It carries out the reaction 1-octadecanoyl-2-(5Z,8Z,11Z,14Z)-eicosatetraenoyl-sn-glycero-3-phosphoethanolamine + O2 = 1-octadecanoyl-2-(15-hydroperoxy-5Z,8Z,11Z,13E-eicosatetraenoyl)-sn-glycero-3-phosphoethanolamine. It catalyses the reaction 1-octadecanoyl-2-(5Z,8Z,11Z,14Z-eicosatetraenoyl)-sn-glycero-3-phospho-(1D-myo-inositol) + O2 = 1-octadecanoyl-2-(15-hydroperoxy-5Z,8Z,11Z,13E-eicosatetraenoyl)-sn-glycero-3-phospho-(1D-myo-inositol). The enzyme catalyses (8Z,11Z,14Z)-eicosatrienoate + O2 = 15-hydroperoxy-(8Z,11Z,13E)-eicosatrienoate. The catalysed reaction is (7S)-hydroperoxy-(4Z,8E,10Z,13Z,16Z,19Z)-docosahexaenoate + O2 = (7S,17S)-dihydroperoxy-(4Z,8E,10Z,13Z,15E,19Z)-docosahexaenoate. It carries out the reaction (5Z,8Z,11Z,14Z)-eicosatetraenoate + O2 = 15-hydroperoxy-(5Z,8Z,11Z,13E)-eicosatetraenoate. It participates in lipid metabolism; hydroperoxy eicosatetraenoic acid biosynthesis. Functionally, non-heme iron-containing dioxygenase that catalyzes the stereo-specific peroxidation of free and esterified polyunsaturated fatty acids (PUFAs) generating a spectrum of bioactive lipid mediators. It inserts peroxyl groups at C15 of arachidonate ((5Z,8Z,11Z,14Z)-eicosatetraenoate) producing (15S)-hydroperoxyeicosatetraenoate/(15S)-HPETE. Also peroxidizes linoleate ((9Z,12Z)-octadecadienoate) to 13-hydroperoxyoctadecadienoate/13-HPODE. Oxygenates arachidonyl derivatives such as 2-arachidonoylglycerol (2-AG) leading to the production and extracellular release of 15-hydroxyeicosatetraenoyl glycerol (15-HETE-G) that acts as a peroxisome proliferator-activated receptor alpha agonist. Has the ability to efficiently class-switch ALOX5 pro-inflammatory mediators into anti-inflammatory intermediates. Participates in the sequential oxidations of DHA ((4Z,7Z,10Z,13Z,16Z,19Z)-docosahexaenoate) to generate specialized pro-resolving mediators (SPMs) resolvin D5 ((7S,17S)-diHPDHA), which can actively down-regulate the immune response and have anti-aggregation properties with platelets. In addition to free PUFAs hydrolyzed from phospholipids, it directly oxidizes PUFAs esterified to membrane-bound phospholipids. Has no detectable 8S-lipoxygenase activity on arachidonate but reacts with (8S)-HPETE to produce (8S,15S)-diHPETE. May regulate progression through the cell cycle and cell proliferation. May also regulate cytokine secretion by macrophages and therefore play a role in the immune response. May also regulate macrophage differentiation into proatherogenic foam cells. Its function is as follows. Does not convert arachidonic acid to 15S-hydroperoxyeicosatetraenoic acid/(15S)-HPETE. The sequence is that of Polyunsaturated fatty acid lipoxygenase ALOX15B from Homo sapiens (Human).